Consider the following 426-residue polypeptide: Serine hydroxymethyltransferase 1 (426 aa).

(6S)-5,6,7,8-tetrahydrofolate is bound by residues Leu-118 and Gly-122 to Leu-124. Lys-227 is subject to N6-(pyridoxal phosphate)lysine.

Belongs to the SHMT family. Homodimer. Pyridoxal 5'-phosphate serves as cofactor.

It is found in the cytoplasm. It catalyses the reaction (6R)-5,10-methylene-5,6,7,8-tetrahydrofolate + glycine + H2O = (6S)-5,6,7,8-tetrahydrofolate + L-serine. It participates in one-carbon metabolism; tetrahydrofolate interconversion. The protein operates within amino-acid biosynthesis; glycine biosynthesis; glycine from L-serine: step 1/1. Functionally, catalyzes the reversible interconversion of serine and glycine with tetrahydrofolate (THF) serving as the one-carbon carrier. This reaction serves as the major source of one-carbon groups required for the biosynthesis of purines, thymidylate, methionine, and other important biomolecules. Also exhibits THF-independent aldolase activity toward beta-hydroxyamino acids, producing glycine and aldehydes, via a retro-aldol mechanism. The chain is Serine hydroxymethyltransferase 1 from Mycobacterium bovis (strain ATCC BAA-935 / AF2122/97).